Consider the following 497-residue polypeptide: MASLLHKFLENASGKKGQDLASTAYLAALDHLLHSFPSIGKSVIDELKSQRSRLKMIASENYSSISVQLAMGNLLTDKYCEGSPFKRFYSCCENVDAIEWECAETAKELFGAESAFVQPHSGADANLLAIMAIITQKIQGPAVKRLGYKTINDLTDKEYAELKAEIGSHVCLGPSLNSGGHLTHGNVRLNVMSKLMRCLPYEVSKKTELFDYAEIARLVRTHKPTVLIAGYSSYSRRLNFSILKQIADDCGAVLWVDMAHFAGLVAGGVFVEEENPIPFADIVTTTTHKTLRGPRGGLMLSTKEYEGMINRACPLMMGGPLPHVIAAKAIALKEALTVDFKKYAHQVVDNARTLAEHFQKHGLRLLTGGTDNHMLIIDLTSLGIPGNVAEDILSSVGIAVNRNTIPSDSEGVWRTSGIRLGTPALTSLGMGSDEMEEVANIIVKVLRNITLRRNADDNFSKSEGELPENIAQEAKARVADLLARFPLYPEIDLETLV.

Residues leucine 176 and 180-182 (GHL) each bind (6S)-5,6,7,8-tetrahydrofolate. Lysine 289 carries the N6-(pyridoxal phosphate)lysine modification.

The protein belongs to the SHMT family. Homodimer. Requires pyridoxal 5'-phosphate as cofactor.

Its subcellular location is the cytoplasm. It catalyses the reaction (6R)-5,10-methylene-5,6,7,8-tetrahydrofolate + glycine + H2O = (6S)-5,6,7,8-tetrahydrofolate + L-serine. The protein operates within one-carbon metabolism; tetrahydrofolate interconversion. It participates in amino-acid biosynthesis; glycine biosynthesis; glycine from L-serine: step 1/1. Functionally, catalyzes the reversible interconversion of serine and glycine with tetrahydrofolate (THF) serving as the one-carbon carrier. This reaction serves as the major source of one-carbon groups required for the biosynthesis of purines, thymidylate, methionine, and other important biomolecules. Also exhibits THF-independent aldolase activity toward beta-hydroxyamino acids, producing glycine and aldehydes, via a retro-aldol mechanism. This Chlamydia felis (strain Fe/C-56) (Chlamydophila felis) protein is Serine hydroxymethyltransferase.